Reading from the N-terminus, the 294-residue chain is Mitochondrial substrate carrier family protein ucpB (294 aa).

The Mitochondrial intermembrane portion of the chain corresponds to 1–10 (MTSQESIGIK). 3 Solcar repeats span residues 9–93 (IKFL…IKNY), 101–187 (TNLL…IKHM), and 197–288 (DGLQ…LRKV). The chain crosses the membrane as a helical span at residues 11-31 (FLFGGLSCMGAAVVSNPVDVL). Residues 32–67 (KTRFQIHGEGIDSKSLGLVNGTIKIIKNEGISAMYK) lie on the Mitochondrial matrix side of the membrane. Residues 68-88 (GLTPSLLREATYSTLRMGGYD) traverse the membrane as a helical segment. At 89-106 (VIKNYFIDSNGKTNLLSK) the chain is on the mitochondrial intermembrane side. A helical membrane pass occupies residues 107-127 (VTSGALSGALGACITSPTDLI). The Mitochondrial matrix segment spans residues 128 to 161 (KVRMQASSKGVKYDSISSAFKEIIAKEGIKGLWK). Residues 162-182 (GVGPTTQRAALLTASQIPSYD) traverse the membrane as a helical segment. At 183 to 192 (HIKHMILDHG) the chain is on the mitochondrial intermembrane side. Residues 193-213 (IIQVDGLQVHIVSSIFAGLIA) form a helical membrane-spanning segment. Over 214 to 267 (SITTSPVDLVKTRIMNQPFDSNGVGLIYKSSYDCFKKTFQSEGISGLYKGFLPN) the chain is Mitochondrial matrix. Residues 268 to 285 (WFRIGPHTIVTFILYEYL) form a helical membrane-spanning segment. Residues 286-294 (RKVSGIKPI) lie on the Mitochondrial intermembrane side of the membrane.

The protein belongs to the mitochondrial carrier (TC 2.A.29) family.

The protein resides in the mitochondrion inner membrane. Functionally, mitochondrial solute carriers shuttle metabolites, nucleotides, and cofactors through the mitochondrial inner membrane. The polypeptide is Mitochondrial substrate carrier family protein ucpB (ucpB) (Dictyostelium discoideum (Social amoeba)).